The sequence spans 141 residues: Prefoldin subunit alpha (141 aa).

It belongs to the prefoldin subunit alpha family. Heterohexamer of two alpha and four beta subunits.

Its subcellular location is the cytoplasm. Functionally, molecular chaperone capable of stabilizing a range of proteins. Seems to fulfill an ATP-independent, HSP70-like function in archaeal de novo protein folding. The chain is Prefoldin subunit alpha (pfdA) from Methanothermobacter thermautotrophicus (strain ATCC 29096 / DSM 1053 / JCM 10044 / NBRC 100330 / Delta H) (Methanobacterium thermoautotrophicum).